The primary structure comprises 188 residues: Small ribosomal subunit protein uS7 (188 aa).

It belongs to the universal ribosomal protein uS7 family. Part of the 30S ribosomal subunit.

Its function is as follows. One of the primary rRNA binding proteins, it binds directly to 16S rRNA where it nucleates assembly of the head domain of the 30S subunit. Is located at the subunit interface close to the decoding center. This Methanococcus maripaludis (strain C7 / ATCC BAA-1331) protein is Small ribosomal subunit protein uS7.